A 361-amino-acid polypeptide reads, in one-letter code: Cytosolic Fe-S cluster assembly factor CFD1 (361 aa).

An ATP-binding site is contributed by 37 to 44; it reads GKGGVGKS. Residues cysteine 218 and cysteine 221 each contribute to the [4Fe-4S] cluster site. A disordered region spans residues 293-314; the sequence is HSQSAAAQLPNSGDTESLTPAG.

This sequence belongs to the Mrp/NBP35 ATP-binding proteins family. NUBP2/CFD1 subfamily. In terms of assembly, heterotetramer of 2 NBP35 and 2 CFD1 chains. [4Fe-4S] cluster is required as a cofactor.

Its subcellular location is the cytoplasm. In terms of biological role, component of the cytosolic iron-sulfur (Fe/S) protein assembly (CIA) machinery. Required for maturation of extramitochondrial Fe-S proteins. The NBP35-CFD1 heterotetramer forms a Fe-S scaffold complex, mediating the de novo assembly of an Fe-S cluster and its transfer to target apoproteins. The protein is Cytosolic Fe-S cluster assembly factor CFD1 of Mycosarcoma maydis (Corn smut fungus).